A 627-amino-acid polypeptide reads, in one-letter code: Phosphomethylpyrimidine synthase (627 aa).

The segment covering 1–24 (MSATQKNNITRLEQLDRQSTQPFP) has biased composition (polar residues). Residues 1–29 (MSATQKNNITRLEQLDRQSTQPFPNSRKV) form a disordered region. Substrate-binding positions include Asn231, Met260, Tyr289, His325, 345 to 347 (SRG), 386 to 389 (DGLR), and Glu425. His429 contacts Zn(2+). A substrate-binding site is contributed by Tyr452. His493 provides a ligand contact to Zn(2+). [4Fe-4S] cluster-binding residues include Cys573, Cys576, and Cys581.

This sequence belongs to the ThiC family. Homodimer. The cofactor is [4Fe-4S] cluster.

It catalyses the reaction 5-amino-1-(5-phospho-beta-D-ribosyl)imidazole + S-adenosyl-L-methionine = 4-amino-2-methyl-5-(phosphooxymethyl)pyrimidine + CO + 5'-deoxyadenosine + formate + L-methionine + 3 H(+). It functions in the pathway cofactor biosynthesis; thiamine diphosphate biosynthesis. Functionally, catalyzes the synthesis of the hydroxymethylpyrimidine phosphate (HMP-P) moiety of thiamine from aminoimidazole ribotide (AIR) in a radical S-adenosyl-L-methionine (SAM)-dependent reaction. This chain is Phosphomethylpyrimidine synthase, found in Pseudomonas aeruginosa (strain UCBPP-PA14).